Consider the following 194-residue polypeptide: MTAIQLIVGLGNPGAEYEQTRHNAGAFFVERIAAAQRVNLVPERKFFGLTGRFTHQGQDVRLLIPTTYMNRSGQAVAALAGFYRIPVESILVAHDELDLPPGVAKLKVGGGHGGHNGLRDIIAQLGNQNTFHRLRLGIGHPGDASKVSGFVLGRAPRAEQEKLDASIDFALGVLPDIFAGEWNRAMKNLHSQKA.

Tyr-17 is a tRNA binding site. Catalysis depends on His-22, which acts as the Proton acceptor. TRNA contacts are provided by Tyr-68, Asn-70, and Asn-116.

This sequence belongs to the PTH family. In terms of assembly, monomer.

It is found in the cytoplasm. It carries out the reaction an N-acyl-L-alpha-aminoacyl-tRNA + H2O = an N-acyl-L-amino acid + a tRNA + H(+). Hydrolyzes ribosome-free peptidyl-tRNAs (with 1 or more amino acids incorporated), which drop off the ribosome during protein synthesis, or as a result of ribosome stalling. In terms of biological role, catalyzes the release of premature peptidyl moieties from peptidyl-tRNA molecules trapped in stalled 50S ribosomal subunits, and thus maintains levels of free tRNAs and 50S ribosomes. This chain is Peptidyl-tRNA hydrolase, found in Pseudomonas savastanoi pv. phaseolicola (strain 1448A / Race 6) (Pseudomonas syringae pv. phaseolicola (strain 1448A / Race 6)).